The chain runs to 224 residues: 2-C-methyl-D-erythritol 4-phosphate cytidylyltransferase (224 aa).

The protein belongs to the IspD/TarI cytidylyltransferase family. IspD subfamily.

The catalysed reaction is 2-C-methyl-D-erythritol 4-phosphate + CTP + H(+) = 4-CDP-2-C-methyl-D-erythritol + diphosphate. The protein operates within isoprenoid biosynthesis; isopentenyl diphosphate biosynthesis via DXP pathway; isopentenyl diphosphate from 1-deoxy-D-xylulose 5-phosphate: step 2/6. In terms of biological role, catalyzes the formation of 4-diphosphocytidyl-2-C-methyl-D-erythritol from CTP and 2-C-methyl-D-erythritol 4-phosphate (MEP). The protein is 2-C-methyl-D-erythritol 4-phosphate cytidylyltransferase of Clostridium botulinum (strain Eklund 17B / Type B).